A 506-amino-acid polypeptide reads, in one-letter code: GPI mannosyltransferase 3 (506 aa).

Asn-115 carries an N-linked (GlcNAc...) asparagine glycan. The next 6 helical transmembrane spans lie at 180–200 (AFACFIRPTNILVWIFPLLFW), 229–249 (YGRLFGIFVLCVSLFLVNIIA), 257–277 (FVFPIISFFQFNVTSGLSSLY), 285–305 (YLSQALPLICGGFLPFVLLTM), 330–350 (FVYPISPILLTLAGKFFSSFS), and 358–378 (FFFLIGLGHALVITFLCRFHQ). N-linked (GlcNAc...) asparagine glycosylation occurs at Asn-395.

It belongs to the glycosyltransferase 22 family. PIGB subfamily.

Its subcellular location is the endoplasmic reticulum membrane. It participates in glycolipid biosynthesis; glycosylphosphatidylinositol-anchor biosynthesis. Mannosyltransferase involved in glycosylphosphatidylinositol-anchor biosynthesis. Transfers the third mannose to Man2-GlcN-acyl-PI during GPI precursor assembly. The protein is GPI mannosyltransferase 3 (gpi10) of Schizosaccharomyces pombe (strain 972 / ATCC 24843) (Fission yeast).